The chain runs to 337 residues: 2-oxoglutarate-dependent dioxygenase frbA (337 aa).

The 116-residue stretch at 175–290 (CSAELRLNHY…RHSLAYFGKP (116 aa)) folds into the Fe2OG dioxygenase domain. 3 residues coordinate Fe cation: His202, Asp204, and His262. Residue Arg281 participates in 2-oxoglutarate binding.

Belongs to the iron/ascorbate-dependent oxidoreductase family. The cofactor is Fe(2+).

The protein operates within antifungal biosynthesis. In terms of biological role, 2-oxoglutarate-dependent dioxygenase; part of the gene cluster that mediates the biosynthesis of the antifungal antibiotic FR901469, an inhibitor of beta-1,3-glucansynthase, exerting antifungal activity against the pathogenes Candida albicans and Aspergillus fumigatus. FR901469 is a cyclic depsipeptide containing 12 amino acid residues and a fatty acid chain. The NRPS frbI contains 12 modules responsible for the formation of the depsipeptide backbone which is denoted as Acyl-Thr-Ala-Tyr-Val-4OHPro-Thr-Thr-3OHPro-threo3OHGln-Gly-Thr-Orn-OH (C71H116N14O23). The PKS frbB is probably involved in the production of the hydrocarbon chain, and the acyl-CoA ligase frbC might be involved in the transport of the chain to the peptide ptoduct of frbI. Because FR901469 contains 3 hydroxylated amino acid residues, the 3 oxygenases frbA, frbH, and frbJ might be participating in amino acid hydroxylation. As no thioesterase domains were detected in frbI or frbB, the thioesterases frbD and frbE may instead release and cyclize the products of the NRPS and PKS, respectively. The protein is 2-oxoglutarate-dependent dioxygenase frbA of Dothideomycetidae sp. (strain 11243) (Fungal sp. (strain No.11243)).